The sequence spans 193 residues: MTALTQPVRLPFVTTDLDVLLRQVAERDVDAFAALYDRTRSRVYGMVTRVLRDPGYSEETTQDIYLQVWRSAGSYDPKAGSPMAWLLTLAHRRAVDRVRSEEAASQRESRYGAASVDPPVDHVADSVILLDERRRVVDCMGSLSDLQREAIQLAYYEGLTYVQVSERLSANLATIKSRMRGGIRGLKNCLGMS.

The interval 35 to 101 is sigma-70 factor domain-2; sequence LYDRTRSRVY…RRAVDRVRSE (67 aa). Positions 59–62 match the Polymerase core binding motif; that stretch reads ETTQ. The sigma-70 factor domain-4 stretch occupies residues 140-187; sequence MGSLSDLQREAIQLAYYEGLTYVQVSERLSANLATIKSRMRGGIRGLK. Positions 161 to 180 form a DNA-binding region, H-T-H motif; sequence YVQVSERLSANLATIKSRMR.

This sequence belongs to the sigma-70 factor family. ECF subfamily. As to quaternary structure, interacts transiently with the RNA polymerase catalytic core formed by RpoA, RpoB, RpoC and RpoZ (2 alpha, 1 beta, 1 beta' and 1 omega subunit) to form the RNA polymerase holoenzyme that can initiate transcription. Interacts (via sigma-70 factor domain 4) with anti-sigma-K factor RskA.

Its function is as follows. Sigma factors are initiation factors that promote the attachment of RNA polymerase to specific initiation sites and are then released. Extracytoplasmic function (ECF) sigma factors are held in an inactive form by an anti-sigma factor until released by regulated intramembrane proteolysis. The chain is ECF RNA polymerase sigma factor SigK (sigK) from Mycobacterium sp. (strain KMS).